Reading from the N-terminus, the 707-residue chain is DNA ligase (707 aa).

The segment at 1–23 is disordered; the sequence is MSSKATQDPEAVLAEQSDDATEA. Residues 53–57, 103–104, and E133 contribute to the NAD(+) site; these read DAEFD and SL. The N6-AMP-lysine intermediate role is filled by K135. The NAD(+) site is built by R156, E196, K315, and K339. Residues C433, C436, C452, and C458 each contribute to the Zn(2+) site. Residues 622 to 707 enclose the BRCT domain; it reads SIERTLDGLS…LENGPDTPDS (86 aa).

It belongs to the NAD-dependent DNA ligase family. LigA subfamily. The cofactor is Mg(2+). Mn(2+) serves as cofactor.

The catalysed reaction is NAD(+) + (deoxyribonucleotide)n-3'-hydroxyl + 5'-phospho-(deoxyribonucleotide)m = (deoxyribonucleotide)n+m + AMP + beta-nicotinamide D-nucleotide.. In terms of biological role, DNA ligase that catalyzes the formation of phosphodiester linkages between 5'-phosphoryl and 3'-hydroxyl groups in double-stranded DNA using NAD as a coenzyme and as the energy source for the reaction. It is essential for DNA replication and repair of damaged DNA. This Mycolicibacterium vanbaalenii (strain DSM 7251 / JCM 13017 / BCRC 16820 / KCTC 9966 / NRRL B-24157 / PYR-1) (Mycobacterium vanbaalenii) protein is DNA ligase.